Here is a 375-residue protein sequence, read N- to C-terminus: Pectate lyase C (375 aa).

The first 22 residues, 1 to 22, serve as a signal peptide directing secretion; it reads MKSLITPITAGLLLALSQPLLA. An intrachain disulfide couples cysteine 94 to cysteine 177. Ca(2+)-binding residues include aspartate 151, aspartate 153, glutamate 188, and aspartate 192. Arginine 240 is a catalytic residue. An intrachain disulfide couples cysteine 351 to cysteine 374.

The protein belongs to the polysaccharide lyase 1 family. PLADES subfamily. It depends on Ca(2+) as a cofactor.

It is found in the secreted. It carries out the reaction Eliminative cleavage of (1-&gt;4)-alpha-D-galacturonan to give oligosaccharides with 4-deoxy-alpha-D-galact-4-enuronosyl groups at their non-reducing ends.. Its pathway is glycan metabolism; pectin degradation; 2-dehydro-3-deoxy-D-gluconate from pectin: step 2/5. Involved in maceration and soft-rotting of plant tissue. This Dickeya chrysanthemi (Pectobacterium chrysanthemi) protein is Pectate lyase C.